The primary structure comprises 156 residues: Small ribosomal subunit protein uS7 (156 aa).

The protein belongs to the universal ribosomal protein uS7 family. As to quaternary structure, part of the 30S ribosomal subunit. Contacts proteins S9 and S11.

One of the primary rRNA binding proteins, it binds directly to 16S rRNA where it nucleates assembly of the head domain of the 30S subunit. Is located at the subunit interface close to the decoding center, probably blocks exit of the E-site tRNA. The sequence is that of Small ribosomal subunit protein uS7 from Nitrobacter winogradskyi (strain ATCC 25391 / DSM 10237 / CIP 104748 / NCIMB 11846 / Nb-255).